We begin with the raw amino-acid sequence, 347 residues long: 4-hydroxythreonine-4-phosphate dehydrogenase (347 aa).

2 residues coordinate substrate: His-137 and Thr-138. Positions 174, 219, and 274 each coordinate a divalent metal cation. Lys-282, Asn-291, and Arg-300 together coordinate substrate.

This sequence belongs to the PdxA family. Homodimer. Zn(2+) is required as a cofactor. The cofactor is Mg(2+). It depends on Co(2+) as a cofactor.

It localises to the cytoplasm. It catalyses the reaction 4-(phosphooxy)-L-threonine + NAD(+) = 3-amino-2-oxopropyl phosphate + CO2 + NADH. Its pathway is cofactor biosynthesis; pyridoxine 5'-phosphate biosynthesis; pyridoxine 5'-phosphate from D-erythrose 4-phosphate: step 4/5. Functionally, catalyzes the NAD(P)-dependent oxidation of 4-(phosphooxy)-L-threonine (HTP) into 2-amino-3-oxo-4-(phosphooxy)butyric acid which spontaneously decarboxylates to form 3-amino-2-oxopropyl phosphate (AHAP). In Cupriavidus pinatubonensis (strain JMP 134 / LMG 1197) (Cupriavidus necator (strain JMP 134)), this protein is 4-hydroxythreonine-4-phosphate dehydrogenase.